We begin with the raw amino-acid sequence, 296 residues long: Nitrogenase iron protein 1 (296 aa).

11 to 18 (GKGGIGKS) is an ATP binding site. Residue C99 coordinates [4Fe-4S] cluster. R102 carries the post-translational modification ADP-ribosylarginine; by dinitrogenase reductase ADP-ribosyltransferase. C133 contributes to the [4Fe-4S] cluster binding site.

This sequence belongs to the NifH/BchL/ChlL family. In terms of assembly, homodimer. The cofactor is [4Fe-4S] cluster. In terms of processing, the reversible ADP-ribosylation of Arg-102 inactivates the nitrogenase reductase and regulates nitrogenase activity.

It carries out the reaction N2 + 8 reduced [2Fe-2S]-[ferredoxin] + 16 ATP + 16 H2O = H2 + 8 oxidized [2Fe-2S]-[ferredoxin] + 2 NH4(+) + 16 ADP + 16 phosphate + 6 H(+). Its function is as follows. The key enzymatic reactions in nitrogen fixation are catalyzed by the nitrogenase complex, which has 2 components: the iron protein and the molybdenum-iron protein. The protein is Nitrogenase iron protein 1 (nifH1) of Azorhizobium caulinodans (strain ATCC 43989 / DSM 5975 / JCM 20966 / LMG 6465 / NBRC 14845 / NCIMB 13405 / ORS 571).